The chain runs to 169 residues: dCTP pyrophosphatase 1 (169 aa).

Positions 1–26 are disordered; that stretch reads MSASEEMLGGARGESTTATGPFSFSS. Over residues 14–26 the composition is skewed to polar residues; sequence ESTTATGPFSFSS. Substrate contacts are provided by residues His37 and 46-50; that span reads WEQFH. Mg(2+)-binding residues include Glu62 and Glu65. Trp72 contributes to the substrate binding site. Ser84 carries the post-translational modification Phosphoserine. Residues Glu94 and Asp97 each coordinate Mg(2+). Tyr101 is a binding site for substrate. Residues 143 to 169 form a disordered region; it reads LPHGATSENQAMGPADPASESTGQVST.

In terms of assembly, homotetramer. It depends on Mg(2+) as a cofactor.

The protein resides in the cytoplasm. It localises to the cytosol. It catalyses the reaction dCTP + H2O = dCMP + diphosphate + H(+). Functionally, hydrolyzes deoxynucleoside triphosphates (dNTPs) to the corresponding nucleoside monophosphates. Has a strong preference for dCTP and its analogs including 5-iodo-dCTP and 5-methyl-dCTP for which it may even have a higher efficiency. May protect DNA or RNA against the incorporation of these genotoxic nucleotide analogs through their catabolism. The sequence is that of dCTP pyrophosphatase 1 from Bos taurus (Bovine).